Consider the following 507-residue polypeptide: ATP synthase subunit alpha, plastid (507 aa).

170-177 (GDRQTGKT) is a binding site for ATP.

It belongs to the ATPase alpha/beta chains family. F-type ATPases have 2 components, CF(1) - the catalytic core - and CF(0) - the membrane proton channel. CF(1) has five subunits: alpha(3), beta(3), gamma(1), delta(1), epsilon(1). CF(0) has four main subunits: a, b, b' and c.

It localises to the plastid membrane. The catalysed reaction is ATP + H2O + 4 H(+)(in) = ADP + phosphate + 5 H(+)(out). Produces ATP from ADP in the presence of a proton gradient across the membrane. The alpha chain is a regulatory subunit. The sequence is that of ATP synthase subunit alpha, plastid from Aneura mirabilis (Parasitic liverwort).